Reading from the N-terminus, the 188-residue chain is Elongation factor P (188 aa).

The protein belongs to the elongation factor P family.

Its subcellular location is the cytoplasm. The protein operates within protein biosynthesis; polypeptide chain elongation. Involved in peptide bond synthesis. Stimulates efficient translation and peptide-bond synthesis on native or reconstituted 70S ribosomes in vitro. Probably functions indirectly by altering the affinity of the ribosome for aminoacyl-tRNA, thus increasing their reactivity as acceptors for peptidyl transferase. This chain is Elongation factor P, found in Bradyrhizobium diazoefficiens (strain JCM 10833 / BCRC 13528 / IAM 13628 / NBRC 14792 / USDA 110).